We begin with the raw amino-acid sequence, 284 residues long: Four and a half LIM domains protein 5 (284 aa).

The C4-type zinc-finger motif lies at 8-32 (CQYCTASLLGKKYVLKDDSLFCVTC). LIM zinc-binding domains are found at residues 39-100 (NYCE…ECSS), 101-160 (KCFH…KEFA), 161-220 (HYCN…LYAN), and 223-283 (VACS…MDSD).

As to quaternary structure, interacts with CREM (via the third LIM domain). Interacts (via second LIM domain) with SPAG8.

The protein resides in the nucleus. Its function is as follows. May be involved in the regulation of spermatogenesis. Stimulates CREM transcriptional activity in a phosphorylation-independent manner. This is Four and a half LIM domains protein 5 (FHL5) from Macaca fascicularis (Crab-eating macaque).